The sequence spans 99 residues: Malonate decarboxylase acyl carrier protein (99 aa).

Residue Ser-25 is modified to O-(phosphoribosyl dephospho-coenzyme A)serine.

The protein belongs to the MdcC family. Post-translationally, covalently binds the prosthetic group of malonate decarboxylase.

The protein localises to the cytoplasm. In terms of biological role, subunit of malonate decarboxylase, it is an acyl carrier protein to which acetyl and malonyl thioester residues are bound via a 2'-(5''-phosphoribosyl)-3'-dephospho-CoA prosthetic group and turn over during the catalytic mechanism. This Pseudomonas aeruginosa (strain LESB58) protein is Malonate decarboxylase acyl carrier protein.